Here is an 861-residue protein sequence, read N- to C-terminus: ATP-dependent helicase rhp16 (861 aa).

Polar residues predominate over residues 1–13 (MGTSCNKINSNSN). The disordered stretch occupies residues 1-217 (MGTSCNKINS…KSIPSHERTH (217 aa)). Composition is skewed to basic and acidic residues over residues 14 to 23 (KGKENMHFVL) and 38 to 57 (VERD…KEFE). The span at 60 to 82 (LSTNKKLIIQSNNTSSQHSTPPL) shows a compositional bias: polar residues. Positions 83 to 95 (SISDTSTHTGSST) are enriched in low complexity. Residues 96 to 106 (DNVEANPNTGF) show a composition bias toward polar residues. Residues 109–123 (ARKRSLRSSNLKKKF) show a composition bias toward basic residues. Positions 131–145 (ESNESEFIDDDESDE) are enriched in acidic residues. Residues 193–204 (ARASSSASSSSR) are compositionally biased toward low complexity. The Helicase ATP-binding domain occupies 268-442 (RQEDSSFGGG…FSLLRFLRAD (175 aa)). 281–288 (DEMGMGKT) serves as a coordination point for ATP. The DEAH box signature appears at 393–396 (DEAH). The RING-type zinc finger occupies 609–652 (CKICDEVAQDAIESRCHHTFCRLCVTEYINAAGDGENVNCPSCF). Residues 695–848 (LVEELYLLRK…TIDQDEKALN (154 aa)) enclose the Helicase C-terminal domain.

Belongs to the SNF2/RAD54 helicase family.

It is found in the nucleus. Its function is as follows. Involved in global genome repair (GGR) via nucleotide excision repair (NER), in conjunction with rhp7, after UV irradiation. This Schizosaccharomyces pombe (strain 972 / ATCC 24843) (Fission yeast) protein is ATP-dependent helicase rhp16 (rhp16).